A 214-amino-acid chain; its full sequence is Chaperone protein TorD (214 aa).

This sequence belongs to the TorD/DmsD family. TorD subfamily.

Its subcellular location is the cytoplasm. Functionally, involved in the biogenesis of TorA. Acts on TorA before the insertion of the molybdenum cofactor and, as a result, probably favors a conformation of the apoenzyme that is competent for acquiring the cofactor. This chain is Chaperone protein TorD, found in Aeromonas salmonicida (strain A449).